The primary structure comprises 98 residues: Large ribosomal subunit protein bL27 (98 aa).

The propeptide occupies 1–10 (MELKMNLQLF). Positions 11 to 30 (AQKKGTGSSKNGRDSISKRL) are disordered.

It belongs to the bacterial ribosomal protein bL27 family. The N-terminus is cleaved by ribosomal processing cysteine protease Prp.

The sequence is that of Large ribosomal subunit protein bL27 from Natranaerobius thermophilus (strain ATCC BAA-1301 / DSM 18059 / JW/NM-WN-LF).